Reading from the N-terminus, the 150-residue chain is Molybdopterin synthase catalytic subunit (150 aa).

Residues 37 to 39, 103 to 104, lysine 119, and 126 to 128 each bind substrate; these read KVR, HR, and KRE. Lysine 119 is covalently cross-linked (Glycyl lysine isopeptide (Lys-Gly) (interchain with G-Cter in MoaD)).

This sequence belongs to the MoaE family. As to quaternary structure, heterotetramer of 2 MoaD subunits and 2 MoaE subunits. Also stable as homodimer. The enzyme changes between these two forms during catalysis.

The catalysed reaction is 2 [molybdopterin-synthase sulfur-carrier protein]-C-terminal-Gly-aminoethanethioate + cyclic pyranopterin phosphate + H2O = molybdopterin + 2 [molybdopterin-synthase sulfur-carrier protein]-C-terminal Gly-Gly + 2 H(+). It functions in the pathway cofactor biosynthesis; molybdopterin biosynthesis. Converts molybdopterin precursor Z to molybdopterin. This requires the incorporation of two sulfur atoms into precursor Z to generate a dithiolene group. The sulfur is provided by MoaD. In Escherichia coli (strain K12), this protein is Molybdopterin synthase catalytic subunit (moaE).